Consider the following 311-residue polypeptide: Acetaldehyde dehydrogenase (311 aa).

The Acyl-thioester intermediate role is filled by Cys-131. NAD(+) is bound by residues 162-170 (SVGPGTRKN) and Asn-273.

It belongs to the acetaldehyde dehydrogenase family.

The catalysed reaction is acetaldehyde + NAD(+) + CoA = acetyl-CoA + NADH + H(+). This is Acetaldehyde dehydrogenase from Ralstonia pickettii (strain 12J).